The sequence spans 190 residues: Threonylcarbamoyl-AMP synthase (190 aa).

The 184-residue stretch at 7-190 folds into the YrdC-like domain; it reads LSSLIKCIRK…IVNGKLIRYV (184 aa).

Belongs to the SUA5 family. TsaC subfamily.

The protein resides in the cytoplasm. It carries out the reaction L-threonine + hydrogencarbonate + ATP = L-threonylcarbamoyladenylate + diphosphate + H2O. Required for the formation of a threonylcarbamoyl group on adenosine at position 37 (t(6)A37) in tRNAs that read codons beginning with adenine. Catalyzes the conversion of L-threonine, HCO(3)(-)/CO(2) and ATP to give threonylcarbamoyl-AMP (TC-AMP) as the acyladenylate intermediate, with the release of diphosphate. In Buchnera aphidicola subsp. Schizaphis graminum (strain Sg), this protein is Threonylcarbamoyl-AMP synthase.